A 354-amino-acid polypeptide reads, in one-letter code: Thiamine thiazole synthase (354 aa).

Substrate-binding positions include Ala83, 104–105, Gly112, and Val177; that span reads EA. At Cys210 the chain carries 2,3-didehydroalanine (Cys). Substrate is bound by residues Asp212, His227, Met305, and 315–317; that span reads RMG.

It belongs to the THI4 family. In terms of assembly, homooctamer. Fe cation is required as a cofactor. In terms of processing, during the catalytic reaction, a sulfide is transferred from Cys-210 to a reaction intermediate, generating a dehydroalanine residue.

Its subcellular location is the cytoplasm. It localises to the nucleus. The enzyme catalyses [ADP-thiazole synthase]-L-cysteine + glycine + NAD(+) = [ADP-thiazole synthase]-dehydroalanine + ADP-5-ethyl-4-methylthiazole-2-carboxylate + nicotinamide + 3 H2O + 2 H(+). In terms of biological role, involved in biosynthesis of the thiamine precursor thiazole. Catalyzes the conversion of NAD and glycine to adenosine diphosphate 5-(2-hydroxyethyl)-4-methylthiazole-2-carboxylic acid (ADT), an adenylated thiazole intermediate. The reaction includes an iron-dependent sulfide transfer from a conserved cysteine residue of the protein to a thiazole intermediate. The enzyme can only undergo a single turnover, which suggests it is a suicide enzyme. May have additional roles in adaptation to various stress conditions and in DNA damage tolerance. This chain is Thiamine thiazole synthase, found in Candida albicans (strain SC5314 / ATCC MYA-2876) (Yeast).